A 1141-amino-acid chain; its full sequence is cGMP-inhibited 3',5'-cyclic phosphodiesterase 3A (1141 aa).

Residues 1-42 (MAVPGDAARVRDKPVHSGVSQAPTAGRDCHHRADPASPRDSG) form a disordered region. The next 6 helical transmembrane spans lie at 61–81 (LSSA…VRLV), 130–150 (LQPS…GLYL), 160–180 (AVAL…GLGV), 185–205 (LLSL…TWLV), 210–230 (LGVL…ISLE), and 232–252 (FKVA…ILLA). Serine 312 is modified (phosphoserine). A phosphoserine; by PKA and PKC mark is found at serine 428 and serine 438. The span at 436 to 448 (RVSSTWTTTTSAT) shows a compositional bias: low complexity. Residues 436 to 482 (RVSSTWTTTTSATGLPTLEPAPVRRDRSTSIKLQEAPSSSPDSWNNP) are disordered. The segment covering 465-482 (SIKLQEAPSSSPDSWNNP) has biased composition (polar residues). Phosphoserine is present on residues serine 492, serine 520, and serine 524. The tract at residues 590–640 (RPYSQGNPADEPLERSGVATRTPSRTDDTAQVTSDYETNNNSDSSDIVQNE) is disordered. The segment covering 608 to 637 (ATRTPSRTDDTAQVTSDYETNNNSDSSDIV) has biased composition (polar residues). The interval 669–1141 (KPILAPEPLV…EEIPTQKPDQ (473 aa)) is interaction with SLFN12. Residues 674-1093 (PEPLVMDNLD…KMWKKVIEEE (420 aa)) form the PDEase domain. Histidine 752 serves as the catalytic Proton donor. Histidine 752 contributes to the AMP binding site. 4 residues coordinate Mn(2+): histidine 756, histidine 836, aspartate 837, and aspartate 950. 3 residues coordinate AMP: aspartate 837, aspartate 950, and glutamine 1001. Aspartate 837 provides a ligand contact to Mg(2+). 2 disordered regions span residues 1023 to 1062 (PGKW…ESPK) and 1100 to 1141 (ENQS…KPDQ). The segment covering 1029-1056 (DSDESGDTDDPEEEEEEAPAPNEEETCE) has biased composition (acidic residues). Residue serine 1033 is modified to Phosphoserine. Threonine 1036 carries the post-translational modification Phosphothreonine. A compositionally biased stretch (polar residues) spans 1100-1113 (ENQSLDQTPQSHSS). Residue lysine 1120 forms a Glycyl lysine isopeptide (Lys-Gly) (interchain with G-Cter in SUMO2) linkage. Positions 1125–1141 (EKGKPRGEEIPTQKPDQ) are enriched in basic and acidic residues.

The protein belongs to the cyclic nucleotide phosphodiesterase family. PDE3 subfamily. As to quaternary structure, homodimer. Interacts with SLFN12; direct low affinity interaction which is stimulated by binding of 17beta-estradiol/E2 to PDE3A and that positively regulates the ribonuclease activity of SLFN12. It depends on Mn(2+) as a cofactor. Mg(2+) is required as a cofactor.

The protein localises to the membrane. Its subcellular location is the cytoplasm. The protein resides in the cytosol. The catalysed reaction is a nucleoside 3',5'-cyclic phosphate + H2O = a nucleoside 5'-phosphate + H(+). The enzyme catalyses 3',5'-cyclic AMP + H2O = AMP + H(+). It catalyses the reaction 3',5'-cyclic GMP + H2O = GMP + H(+). It carries out the reaction 3',5'-cyclic UMP + H2O = UMP + H(+). Inhibited by cGMP. Inhibited by 17beta-estradiol. Inhibited by milrinone. Its function is as follows. Cyclic nucleotide phosphodiesterase with specificity for the second messengers cAMP and cGMP, which are key regulators of many important physiological processes. Also has activity toward cUMP. Independently of its catalytic activity it is part of an E2/17beta-estradiol-induced pro-apoptotic signaling pathway. E2 stabilizes the PDE3A/SLFN12 complex in the cytosol, promoting the dephosphorylation of SLFN12 and activating its pro-apoptotic ribosomal RNA/rRNA ribonuclease activity. This apoptotic pathway might be relevant in tissues with high concentration of E2 and be for instance involved in placenta remodeling. The chain is cGMP-inhibited 3',5'-cyclic phosphodiesterase 3A from Homo sapiens (Human).